The sequence spans 311 residues: Beta-ketoacyl-[acyl-carrier-protein] synthase III (311 aa).

Catalysis depends on residues Cys114 and His238. The tract at residues 239–243 is ACP-binding; it reads QANIR. Residue Asn268 is part of the active site.

This sequence belongs to the thiolase-like superfamily. FabH family. Homodimer.

The protein localises to the cytoplasm. It catalyses the reaction malonyl-[ACP] + acetyl-CoA + H(+) = 3-oxobutanoyl-[ACP] + CO2 + CoA. The protein operates within lipid metabolism; fatty acid biosynthesis. Catalyzes the condensation reaction of fatty acid synthesis by the addition to an acyl acceptor of two carbons from malonyl-ACP. Catalyzes the first condensation reaction which initiates fatty acid synthesis and may therefore play a role in governing the total rate of fatty acid production. Possesses both acetoacetyl-ACP synthase and acetyl transacylase activities. Its substrate specificity determines the biosynthesis of branched-chain and/or straight-chain of fatty acids. In Neorickettsia sennetsu (strain ATCC VR-367 / Miyayama) (Ehrlichia sennetsu), this protein is Beta-ketoacyl-[acyl-carrier-protein] synthase III.